The following is a 158-amino-acid chain: Large ribosomal subunit protein uL16 (158 aa).

The segment at 1–22 (MLSPKRTKYRKQQRGRMKGKAT) is disordered.

It belongs to the universal ribosomal protein uL16 family. In terms of assembly, part of the 50S ribosomal subunit.

Its function is as follows. Binds 23S rRNA and is also seen to make contacts with the A and possibly P site tRNAs. In Synechococcus sp. (strain JA-3-3Ab) (Cyanobacteria bacterium Yellowstone A-Prime), this protein is Large ribosomal subunit protein uL16.